The following is a 156-amino-acid chain: Small ribosomal subunit protein uS7c (156 aa).

Belongs to the universal ribosomal protein uS7 family. Part of the 30S ribosomal subunit.

Its subcellular location is the plastid. It localises to the chloroplast. Its function is as follows. One of the primary rRNA binding proteins, it binds directly to 16S rRNA where it nucleates assembly of the head domain of the 30S subunit. In Tupiella akineta (Green alga), this protein is Small ribosomal subunit protein uS7c (rps7).